A 311-amino-acid polypeptide reads, in one-letter code: 4-hydroxy-tetrahydrodipicolinate synthase (311 aa).

Pyruvate is bound at residue Thr-51. Residue Tyr-140 is the Proton donor/acceptor of the active site. The Schiff-base intermediate with substrate role is filled by Lys-168. Ile-209 is a binding site for pyruvate.

Belongs to the DapA family. As to quaternary structure, homotetramer; dimer of dimers.

It localises to the cytoplasm. It carries out the reaction L-aspartate 4-semialdehyde + pyruvate = (2S,4S)-4-hydroxy-2,3,4,5-tetrahydrodipicolinate + H2O + H(+). It functions in the pathway amino-acid biosynthesis; L-lysine biosynthesis via DAP pathway; (S)-tetrahydrodipicolinate from L-aspartate: step 3/4. Catalyzes the condensation of (S)-aspartate-beta-semialdehyde [(S)-ASA] and pyruvate to 4-hydroxy-tetrahydrodipicolinate (HTPA). The protein is 4-hydroxy-tetrahydrodipicolinate synthase of Streptococcus suis (strain 98HAH33).